The primary structure comprises 101 residues: uncharacterized protein (101 aa).

A helical transmembrane segment spans residues 13–33 (FISIMCLFSIPLCFSLSIFFF).

Its subcellular location is the membrane. This is an uncharacterized protein from Schizosaccharomyces pombe (strain 972 / ATCC 24843) (Fission yeast).